A 403-amino-acid polypeptide reads, in one-letter code: Putative F-box/LRR-repeat protein At5g38386 (403 aa).

Residues 1 to 47 enclose the F-box domain; that stretch reads MDHLSNLPDELLCHIMSFLTTKEAALISVLSKRWRNLIAFVPNLDIF. LRR repeat units lie at residues 64-91, 93-119, 131-156, 175-203, 243-274, and 275-300; these read IRQL…SLCC, GGSY…DLSM, VFEN…VMNH, LKTL…SYSD, YLYF…SIKS, and VESR…VLEA.

This Arabidopsis thaliana (Mouse-ear cress) protein is Putative F-box/LRR-repeat protein At5g38386.